The following is a 330-amino-acid chain: MVSLQAVQQANVGIGSLPAGLVALFMGATSGIGQSALHHFAQHASSPRIYSIARPSAVRSHETFLDSLRSSNPSGTYNLIEADVSLISEIDRIVADIKENEPKIDILFMSAGFMAFEGRKDTREGLDPSMSTRYYSRLRLVQQLVPLLNNAPSPRVVSVLGGGLESPLNEQDLDLRDPKNWTFWSSSMHSGTMGTLTLERIARANPNLSIVHWFPGTVATPGLVRANQFGMSPPNPTSADEAGQRWAFIATNDRYAVRGGLVPVPIGLSPVQKSGGGIFLVDPAGEGSNNERVLAGLRKRGVDDAVWRFTEGIFASAAKAGRSSQAKDEL.

NADP(+) contacts are provided by residues Val-12–Leu-17, His-38–Gln-42, Arg-59–Ser-60, Ile-80–Ala-82, and Leu-160–Gly-163. A helical membrane pass occupies residues Val-12–Ile-32. The interaction with ASS1 stretch occupies residues Ser-158–Ala-202. N-linked (GlcNAc...) asparagine glycosylation is found at Asn-180 and Asn-207.

The protein belongs to the NmrA-type oxidoreductase family.

The protein resides in the membrane. NmrA-like family domain-containing oxidoreductase; part of the gene cluster that mediates the biosynthesis of notoamide, a fungal indole alkaloid that belongs to a family of natural products containing a characteristic bicyclo[2.2.2]diazaoctane core. The first step of notoamide biosynthesis involves coupling of L-proline and L-tryptophan by the bimodular NRPS notE, to produce cyclo-L-tryptophan-L-proline called brevianamide F. The reverse prenyltransferase notF then acts as a deoxybrevianamide E synthase and converts brevianamide F to deoxybrevianamide E via reverse prenylation at C-2 of the indole ring leading to the bicyclo[2.2.2]diazaoctane core. Deoxybrevianamide E is further hydroxylated at C-6 of the indole ring, likely catalyzed by the cytochrome P450 monooxygenase notG, to yield 6-hydroxy-deoxybrevianamide E. 6-hydroxy-deoxybrevianamide E is a specific substrate of the prenyltransferase notC for normal prenylation at C-7 to produce 6-hydroxy-7-prenyl-deoxybrevianamide, also called notoamide S. As the proposed pivotal branching point in notoamide biosynthesis, notoamide S can be diverted to notoamide E through an oxidative pyran ring closure putatively catalyzed by either notH cytochrome P450 monooxygenase or the notD FAD-linked oxidoreductase. This step would be followed by an indole 2,3-epoxidation-initiated pinacol-like rearrangement catalyzed by the notB FAD-dependent monooxygenase leading to the formation of notoamide C and notoamide D. On the other hand notoamide S is converted to notoamide T by notH (or notD), a bifunctional oxidase that also functions as the intramolecular Diels-Alderase responsible for generation of (+)-notoamide T. To generate antipodal (-)-notoaminide T, notH' (or notD') in Aspergillus versicolor is expected to catalyze a Diels-Alder reaction leading to the opposite stereochemistry. The remaining oxidoreductase notD (or notH) likely catalyzes the oxidative pyran ring formation to yield (+)-stephacidin A. The FAD-dependent monooxygenase notI is highly similar to notB and is predicted to catalyze a similar conversion from (+)-stephacidin A to (-)-notoamide B via the 2,3-epoxidation of (+)-stephacidin A followed by a pinacol-type rearrangement. Finally, it remains unclear which enzyme could be responsible for the final hydroxylation steps leading to notoamide A and sclerotiamide. The function of notO in the notoamide biosynthesis has not been determined yet. The chain is NmrA-like family domain-containing oxidoreductase notO from Aspergillus sp. (strain MF297-2).